The following is a 239-amino-acid chain: MLKRVFLSLLVLIGLLLLTVLGLDRWMSWKTAPYIYDELQDLPYRQVGVVLGTAKYYRTGVINQYYRYRIQGAINAYNSGKVNYLLLSGDNALQSYNEPMTMRKDLIAAGVDPSDIVLDYAGFRTLDSIVRTRKVFDTNDFIIITQRFHCERALFIALHMGIQAQCYAVPSPKDMLSVRIREFAARFGALADLYIFKREPRFLGPLVPIPAMHQVPEDAQGYPAVTPEQLLELQKKQGK.

At 1 to 6 the chain is on the cytoplasmic side; it reads MLKRVF. A helical membrane pass occupies residues 7-23; that stretch reads LSLLVLIGLLLLTVLGL. Topologically, residues 24–239 are periplasmic; it reads DRWMSWKTAP…LLELQKKQGK (216 aa).

The protein localises to the cell inner membrane. Its function is as follows. Participates in the barrier function of the cell envelope. The protein is Protein SanA (sanA) of Escherichia coli O157:H7.